The following is a 218-amino-acid chain: Ribose-5-phosphate isomerase A (218 aa).

Substrate-binding positions include 28–31 (SGST), 81–84 (DGAD), and 94–97 (KGGG). Catalysis depends on E103, which acts as the Proton acceptor. K121 serves as a coordination point for substrate.

Belongs to the ribose 5-phosphate isomerase family. Homodimer.

It carries out the reaction aldehydo-D-ribose 5-phosphate = D-ribulose 5-phosphate. Its pathway is carbohydrate degradation; pentose phosphate pathway; D-ribose 5-phosphate from D-ribulose 5-phosphate (non-oxidative stage): step 1/1. Catalyzes the reversible conversion of ribose-5-phosphate to ribulose 5-phosphate. The chain is Ribose-5-phosphate isomerase A from Dichelobacter nodosus (strain VCS1703A).